We begin with the raw amino-acid sequence, 391 residues long: S-adenosylmethionine synthase (391 aa).

An ATP-binding site is contributed by histidine 19. A Mg(2+)-binding site is contributed by aspartate 21. Position 47 (glutamate 47) interacts with K(+). Residues glutamate 60 and glutamine 103 each coordinate L-methionine. Residues 103-113 (QSPDIAQGVDR) form a flexible loop region. ATP-binding positions include 168 to 170 (DGK), 236 to 237 (RF), aspartate 245, 251 to 252 (RK), alanine 268, and lysine 272. Position 245 (aspartate 245) interacts with L-methionine. Lysine 276 contributes to the L-methionine binding site.

Belongs to the AdoMet synthase family. As to quaternary structure, homotetramer; dimer of dimers. Mg(2+) serves as cofactor. Requires K(+) as cofactor.

It localises to the cytoplasm. It carries out the reaction L-methionine + ATP + H2O = S-adenosyl-L-methionine + phosphate + diphosphate. It functions in the pathway amino-acid biosynthesis; S-adenosyl-L-methionine biosynthesis; S-adenosyl-L-methionine from L-methionine: step 1/1. Its function is as follows. Catalyzes the formation of S-adenosylmethionine (AdoMet) from methionine and ATP. The overall synthetic reaction is composed of two sequential steps, AdoMet formation and the subsequent tripolyphosphate hydrolysis which occurs prior to release of AdoMet from the enzyme. This chain is S-adenosylmethionine synthase, found in Oleidesulfovibrio alaskensis (strain ATCC BAA-1058 / DSM 17464 / G20) (Desulfovibrio alaskensis).